A 240-amino-acid polypeptide reads, in one-letter code: Probable transcriptional regulatory protein HPG27_148 (240 aa).

This sequence belongs to the TACO1 family.

The protein localises to the cytoplasm. This chain is Probable transcriptional regulatory protein HPG27_148, found in Helicobacter pylori (strain G27).